We begin with the raw amino-acid sequence, 748 residues long: Bifunctional lysine-specific demethylase and histidyl-hydroxylase NO66 (748 aa).

Disordered stretches follow at residues N65–Y135 and T160–G264. Residues L94–S110 are compositionally biased toward basic and acidic residues. The span at L124–T134 shows a compositional bias: polar residues. A compositionally biased stretch (acidic residues) spans V163 to M193. Basic and acidic residues predominate over residues I194–I203. Over residues S207–G264 the composition is skewed to acidic residues. The JmjC domain occupies Q399 to A543. Residues H442, D444, and H509 each coordinate Fe cation.

This sequence belongs to the ROX family. NO66 subfamily. The cofactor is Fe(2+).

Its subcellular location is the nucleus. The catalysed reaction is N(6),N(6)-dimethyl-L-lysyl(36)-[histone H3] + 2 2-oxoglutarate + 2 O2 = L-lysyl(36)-[histone H3] + 2 formaldehyde + 2 succinate + 2 CO2. Functionally, oxygenase that can act as both a histone lysine demethylase and a ribosomal histidine hydroxylase. Specifically demethylates 'Lys-4' (H3K4me) and 'Lys-36' (H3K36me) of histone H3, thereby playing a central role in histone code. Mediates response to multiple stress stimuli, including heat shock and osmotic, oxidative, and ethanol stress. This is Bifunctional lysine-specific demethylase and histidyl-hydroxylase NO66 (jmjc-1) from Caenorhabditis elegans.